The following is a 246-amino-acid chain: Adenosylcobinamide-GDP ribazoletransferase (246 aa).

7 helical membrane-spanning segments follow: residues 30 to 50 (VNWY…VHQA), 51 to 71 (GLVL…WVYV), 105 to 125 (VGAM…GAVA), 131 to 151 (GWGS…LLSI), 167 to 189 (ISSG…AGWY), 193 to 210 (LQVM…LWFS), and 226 to 246 (GAVI…SWWL).

It belongs to the CobS family. It depends on Mg(2+) as a cofactor.

It localises to the cell membrane. The enzyme catalyses alpha-ribazole + adenosylcob(III)inamide-GDP = adenosylcob(III)alamin + GMP + H(+). It carries out the reaction alpha-ribazole 5'-phosphate + adenosylcob(III)inamide-GDP = adenosylcob(III)alamin 5'-phosphate + GMP + H(+). Its pathway is cofactor biosynthesis; adenosylcobalamin biosynthesis; adenosylcobalamin from cob(II)yrinate a,c-diamide: step 7/7. Functionally, joins adenosylcobinamide-GDP and alpha-ribazole to generate adenosylcobalamin (Ado-cobalamin). Also synthesizes adenosylcobalamin 5'-phosphate from adenosylcobinamide-GDP and alpha-ribazole 5'-phosphate. In Brevibacillus brevis (strain 47 / JCM 6285 / NBRC 100599), this protein is Adenosylcobinamide-GDP ribazoletransferase.